A 23-amino-acid polypeptide reads, in one-letter code: Dahlein-4.3 (23 aa).

In terms of tissue distribution, expressed by the skin dorsal glands.

Its subcellular location is the secreted. Has no antimicrobial activity. In Ranoidea dahlii (Dahl's aquatic frog), this protein is Dahlein-4.3.